Reading from the N-terminus, the 167-residue chain is Epithelial membrane protein 2 (167 aa).

Residues M1 to I21 form a helical membrane-spanning segment. N-linked (GlcNAc...) asparagine glycosylation is found at N44, N47, and N52. Helical transmembrane passes span T67–F87, F95–I115, and Y143–L163.

This sequence belongs to the PMP-22/EMP/MP20 family. Interacts with PTK2; regulates PTK2 activation and localization. Interacts with ITGB3; regulates the levels of the heterodimer ITGA5-ITGB3 integrin surface expression. Interacts with P2RX7 (via C-terminus). Interacts with ITGB1; the interaction may be direct or indirect and ITGB1 has a heterodimer form.

Its subcellular location is the golgi apparatus membrane. It is found in the cell membrane. The protein resides in the apical cell membrane. The protein localises to the membrane raft. It localises to the cytoplasm. Its subcellular location is the nucleus. It is found in the perinuclear region. In terms of biological role, functions as a key regulator of cell membrane composition by regulating protein surface expression. Also, plays a role in regulation of processes including cell migration, cell proliferation, cell contraction and cell adhesion. Regulates transepithelial migration of neutrophils into the alveolar lumen, potentially via mediation of cell surface expression of adhesion markers and lipid raft formation. Negatively regulates caveolae formation by reducing CAV1 expression and CAV1 amount by increasing lysosomal degradation. Facilitates surface trafficking and the formation of lipid rafts bearing GPI-anchor proteins. Regulates surface expression of MHC1 and ICAM1 proteins increasing susceptibility to T-cell mediated cytotoxicity. Regulates the plasma membrane expression of the integrin heterodimers ITGA6-ITGB1, ITGA5-ITGB3 and ITGA5-ITGB1 resulting in modulation of cell-matrix adhesion. Also regulates many processes through PTK2. Regulates blood vessel endothelial cell migration and angiogenesis by regulating VEGF protein expression through PTK2 activation. Regulates cell migration and cell contraction through PTK2 and SRC activation. Regulates focal adhesion density, F-actin conformation and cell adhesion capacity through interaction with PTK2. Positively regulates cell proliferation. Plays a role during cell death and cell blebbing. Promotes angiogenesis and vasculogenesis through induction of VEGFA via a HIF1A-dependent pathway. Also plays a role in embryo implantation by regulating surface trafficking of integrin heterodimer ITGA5-ITGB3. Plays a role in placental angiogenesis and uterine natural killer cell regulation at the maternal-fetal placental interface, however not required in the maternal tissues for a viable pregnancy. Involved in the early stages of embryogenic development and cardiogenesis, potentially via regulation of epithelial-mesenchymal transition timing. May play a role in glomerular filtration. The polypeptide is Epithelial membrane protein 2 (EMP2) (Pan troglodytes (Chimpanzee)).